Here is a 221-residue protein sequence, read N- to C-terminus: UPF0758 protein YicR (221 aa).

Residues 99–221 (ALLSPEMTRE…YVSFAERGWI (123 aa)) enclose the MPN domain. Residues His-170, His-172, and Asp-183 each contribute to the Zn(2+) site. The short motif at 170-183 (HNHPSGCAEPSKAD) is the JAMM motif element.

It belongs to the UPF0758 family. YicR subfamily.

This chain is UPF0758 protein YicR, found in Salmonella paratyphi A (strain ATCC 9150 / SARB42).